A 119-amino-acid polypeptide reads, in one-letter code: Large ribosomal subunit protein bL20 (119 aa).

The protein belongs to the bacterial ribosomal protein bL20 family.

In terms of biological role, binds directly to 23S ribosomal RNA and is necessary for the in vitro assembly process of the 50S ribosomal subunit. It is not involved in the protein synthesizing functions of that subunit. This Dechloromonas aromatica (strain RCB) protein is Large ribosomal subunit protein bL20.